Consider the following 807-residue polypeptide: SWI/SNF complex subunit SWI3C (807 aa).

Residues 1 to 74 (MPASEDRRGK…DPGLGIGEVV (74 aa)) form a disordered region. The span at 28–54 (EEEDMEEEDEENNNNNNEEMDDVENAD) shows a compositional bias: acidic residues. Residues 176–274 (HVLPMHSDWF…YCATAQSHPG (99 aa)) form the SWIRM domain. Residues 340–394 (LCDSHCNHCSRPLPTVYFQSQKKGDILLCCDCFHHGRFVVGHSCLDFVRVDPMKF) form a ZZ-type; degenerate zinc finger. 4 residues coordinate Zn(2+): Cys345, Cys348, Cys368, and Cys371. In terms of domain architecture, SANT spans 398-449 (QDGDNWTDQETLLLLEAVELYNENWVQIADHVGSKSKAQCILHFLRLPVEDG). Polar residues-rich tracts occupy residues 458-467 (GVTNTENPTN) and 552-569 (ENQQQDGAHKTSSQNGAE). Disordered stretches follow at residues 458–487 (GVTNTENPTNGYDHKGTDSNGDLPGYSEQG) and 549–571 (LDGENQQQDGAHKTSSQNGAEAQ). Residues 598 to 656 (ADHEEREIQRLSANIVNHQLKRMELKLKQFAEIETLLMKECEQVEKTRQRFSAERARML) adopt a coiled-coil conformation. 2 stretches are compositionally biased toward low complexity: residues 692–703 (QHQQQQASATSQ) and 726–739 (QQQQQQQQQQQQQQ). 3 disordered regions span residues 692–713 (QHQQQQASATSQPSIIPGFSNN), 721–740 (HFMARQQQQQQQQQQQQQQA), and 781–807 (SINQPSFSHPMVRSSTGSGSGSGLGLN). A compositionally biased stretch (gly residues) spans 798–807 (SGSGSGLGLN).

As to quaternary structure, heterodimer. Interacts with SWI3A, SWI3B and BRM, but not with BSH. Interacts with MORC6 and SUVH9. As to expression, expressed in roots, stems, leaves, flowers and siliques.

The protein resides in the nucleus. Its function is as follows. Component of a multiprotein complex equivalent of the SWI/SNF complex, an ATP-dependent chromatin-remodeling complex, which is required for the positive and negative regulation of gene expression of a large number of genes. It changes chromatin structure by altering DNA-histone contacts within a nucleosome, leading eventually to a change in nucleosome position, thus facilitating or repressing binding of gene-specific transcription factors. This is SWI/SNF complex subunit SWI3C (SWI3C) from Arabidopsis thaliana (Mouse-ear cress).